A 162-amino-acid polypeptide reads, in one-letter code: Interleukin-15 (162 aa).

A signal peptide spans 1 to 29; it reads MRISKPYLRSTSIQCYLCLLLNSHFLAEA. Positions 30-48 are excised as a propeptide; it reads GIHVFIFGCISAGLPKTEA. 2 disulfides stabilise this stretch: Cys-83–Cys-133 and Cys-90–Cys-136. N-linked (GlcNAc...) asparagine glycans are attached at residues Asn-108, Asn-119, Asn-127, and Asn-143.

Belongs to the IL-15/IL-21 family. As to expression, expressed in many tissues including heart, spleen, lung, liver, muscle and kidney (at mRNA level). Expressed in many tissues including heart, spleen, lung, liver, muscle and kidney (at protein level).

It localises to the secreted. Its function is as follows. Cytokine that plays a major role in the development of inflammatory and protective immune responses to microbial invaders and parasites by modulating immune cells of both the innate and adaptive immune systems. Stimulates the proliferation of natural killer cells, T-cells and B-cells and promotes the secretion of several cytokines. In monocytes, induces the production of IL8 and monocyte chemotactic protein 1/CCL2, two chemokines that attract neutrophils and monocytes respectively to sites of infection. Unlike most cytokines, which are secreted in soluble form, IL15 is expressed in association with its high affinity IL15RA on the surface of IL15-producing cells and delivers signals to target cells that express IL2RB and IL2RG receptor subunits. Binding to its receptor triggers the phosphorylation of JAK1 and JAK3 and the recruitment and subsequent phosphorylation of signal transducer and activator of transcription-3/STAT3 and STAT5. In mast cells, induces the rapid tyrosine phosphorylation of STAT6 and thereby controls mast cell survival and release of cytokines such as IL4. The sequence is that of Interleukin-15 (IL15) from Oryctolagus cuniculus (Rabbit).